The chain runs to 445 residues: Solute carrier family 52, riboflavin transporter, member 2 (445 aa).

6 helical membrane passes run 14–34 (LLVA…WVEL), 47–67 (LPSY…VVTL), 86–106 (VLGM…APVA), 112–132 (VAFL…NVTF), 147–167 (FFLG…VQGV), and 196–216 (FFWA…GLLL). The interval 228–264 (ELGSGLQVGAPGAEEEVEESSPLQEPPSQAAGTTPGP) is disordered. A compositionally biased stretch (low complexity) spans 247–258 (SSPLQEPPSQAA). 5 helical membrane passes run 277–297 (ACLL…LPAV), 312–332 (LAVV…MGVL), 339–359 (LGGL…LAVL), 366–386 (VGTS…LGVF), and 404–424 (ALLA…VAMF).

Belongs to the riboflavin transporter family. Highly expressed in brain, fetal brain and salivary gland. Weakly expressed in other tissues.

The protein localises to the cell membrane. The enzyme catalyses riboflavin(in) = riboflavin(out). Its activity is regulated as follows. Riboflavin transport is Na(+)-independent but moderately pH-sensitive. Activity is strongly inhibited by riboflavin analogs, such as lumiflavin. Weakly inhibited by flavin adenine dinucleotide (FAD) and flavin mononucleotide (FMN). Functionally, plasma membrane transporter mediating the uptake by cells of the water soluble vitamin B2/riboflavin that plays a key role in biochemical oxidation-reduction reactions of the carbohydrate, lipid, and amino acid metabolism. Humans are unable to synthesize vitamin B2/riboflavin and must obtain it via intestinal absorption. May also act as a receptor for 4-hydroxybutyrate. Its function is as follows. (Microbial infection) In case of infection by retroviruses, acts as a cell receptor to retroviral envelopes similar to the porcine endogenous retrovirus (PERV-A). This Homo sapiens (Human) protein is Solute carrier family 52, riboflavin transporter, member 2 (SLC52A2).